The primary structure comprises 702 residues: Ribosomal RNA large subunit methyltransferase K/L (702 aa).

Positions 43–154 constitute a THUMP domain; the sequence is LIYQSLMWSR…KETASIALDL (112 aa).

Belongs to the methyltransferase superfamily. RlmKL family.

Its subcellular location is the cytoplasm. The enzyme catalyses guanosine(2445) in 23S rRNA + S-adenosyl-L-methionine = N(2)-methylguanosine(2445) in 23S rRNA + S-adenosyl-L-homocysteine + H(+). It catalyses the reaction guanosine(2069) in 23S rRNA + S-adenosyl-L-methionine = N(2)-methylguanosine(2069) in 23S rRNA + S-adenosyl-L-homocysteine + H(+). Specifically methylates the guanine in position 2445 (m2G2445) and the guanine in position 2069 (m7G2069) of 23S rRNA. In Salmonella gallinarum (strain 287/91 / NCTC 13346), this protein is Ribosomal RNA large subunit methyltransferase K/L.